We begin with the raw amino-acid sequence, 320 residues long: Methionyl-tRNA formyltransferase (320 aa).

117–120 (SLLP) serves as a coordination point for (6S)-5,6,7,8-tetrahydrofolate.

Belongs to the Fmt family.

The catalysed reaction is L-methionyl-tRNA(fMet) + (6R)-10-formyltetrahydrofolate = N-formyl-L-methionyl-tRNA(fMet) + (6S)-5,6,7,8-tetrahydrofolate + H(+). Functionally, attaches a formyl group to the free amino group of methionyl-tRNA(fMet). The formyl group appears to play a dual role in the initiator identity of N-formylmethionyl-tRNA by promoting its recognition by IF2 and preventing the misappropriation of this tRNA by the elongation apparatus. The chain is Methionyl-tRNA formyltransferase from Bordetella petrii (strain ATCC BAA-461 / DSM 12804 / CCUG 43448).